The primary structure comprises 668 residues: Type II methyltransferase M.MwoI (668 aa).

Belongs to the N(4)/N(6)-methyltransferase family. N(4) subfamily.

It carries out the reaction a 2'-deoxycytidine in DNA + S-adenosyl-L-methionine = an N(4)-methyl-2'-deoxycytidine in DNA + S-adenosyl-L-homocysteine + H(+). In terms of biological role, a beta subtype methylase, recognizes the double-stranded DNA sequence 5'-GCNNNNNNNGC-3', methylates C-2 on both strands, and protects the DNA from cleavage by the MwoI endonuclease. The sequence is that of Type II methyltransferase M.MwoI from Methanothermobacter wolfeii (Methanobacterium wolfei).